The chain runs to 141 residues: Large ribosomal subunit protein uL11 (141 aa).

Belongs to the universal ribosomal protein uL11 family. In terms of assembly, part of the ribosomal stalk of the 50S ribosomal subunit. Interacts with L10 and the large rRNA to form the base of the stalk. L10 forms an elongated spine to which L12 dimers bind in a sequential fashion forming a multimeric L10(L12)X complex. One or more lysine residues are methylated.

Its function is as follows. Forms part of the ribosomal stalk which helps the ribosome interact with GTP-bound translation factors. This Chlamydia caviae (strain ATCC VR-813 / DSM 19441 / 03DC25 / GPIC) (Chlamydophila caviae) protein is Large ribosomal subunit protein uL11.